The chain runs to 348 residues: Dihydroorotase (348 aa).

2 residues coordinate Zn(2+): His-17 and His-19. Residues 19-21 (HLR) and Asn-45 contribute to the substrate site. The Zn(2+) site is built by Lys-103, His-140, and His-178. Lys-103 is modified (N6-carboxylysine). Substrate is bound at residue His-140. A substrate-binding site is contributed by Leu-223. Position 251 (Asp-251) interacts with Zn(2+). The active site involves Asp-251. Substrate-binding residues include His-255 and Ala-267.

It belongs to the metallo-dependent hydrolases superfamily. DHOase family. Class II DHOase subfamily. As to quaternary structure, homodimer. Zn(2+) is required as a cofactor.

It carries out the reaction (S)-dihydroorotate + H2O = N-carbamoyl-L-aspartate + H(+). The protein operates within pyrimidine metabolism; UMP biosynthesis via de novo pathway; (S)-dihydroorotate from bicarbonate: step 3/3. Catalyzes the reversible cyclization of carbamoyl aspartate to dihydroorotate. The protein is Dihydroorotase of Yersinia pseudotuberculosis serotype I (strain IP32953).